The chain runs to 310 residues: Malate dehydrogenase (310 aa).

Residues 7–13 (GAAGGIG) and Asp34 each bind NAD(+). Arg81 and Arg87 together coordinate substrate. Residues Asn94 and 117-119 (ITN) each bind NAD(+). 2 residues coordinate substrate: Asn119 and Arg153. His177 serves as the catalytic Proton acceptor. Met227 lines the NAD(+) pocket.

This sequence belongs to the LDH/MDH superfamily. MDH type 1 family. Homodimer.

It carries out the reaction (S)-malate + NAD(+) = oxaloacetate + NADH + H(+). In terms of biological role, catalyzes the reversible oxidation of malate to oxaloacetate. The sequence is that of Malate dehydrogenase from Vibrio vulnificus (strain YJ016).